The primary structure comprises 132 residues: Small ribosomal subunit protein bS6 (132 aa).

The interval 96-132 (HAEGPSIQMQKRDERERGDRGDRSDRGDRGDRGGFRR) is disordered. Residues 105-132 (QKRDERERGDRGDRSDRGDRGDRGGFRR) are compositionally biased toward basic and acidic residues.

It belongs to the bacterial ribosomal protein bS6 family.

Functionally, binds together with bS18 to 16S ribosomal RNA. This is Small ribosomal subunit protein bS6 from Cereibacter sphaeroides (strain ATCC 17023 / DSM 158 / JCM 6121 / CCUG 31486 / LMG 2827 / NBRC 12203 / NCIMB 8253 / ATH 2.4.1.) (Rhodobacter sphaeroides).